Reading from the N-terminus, the 102-residue chain is Small ribosomal subunit protein uS10 (102 aa).

Belongs to the universal ribosomal protein uS10 family. As to quaternary structure, part of the 30S ribosomal subunit.

Involved in the binding of tRNA to the ribosomes. This is Small ribosomal subunit protein uS10 from Staphylococcus aureus (strain JH9).